The chain runs to 367 residues: Alginate lyase (367 aa).

An N-terminal signal peptide occupies residues 1–24; it reads MTIFKRISSPALLALALFGGAAHA. Substrate contacts are provided by residues 63 to 64, 136 to 137, and Tyr-254; these read SK and HT.

It belongs to the polysaccharide lyase 5 family.

Its subcellular location is the periplasm. It carries out the reaction Eliminative cleavage of alginate to give oligosaccharides with 4-deoxy-alpha-L-erythro-hex-4-enuronosyl groups at their non-reducing ends and beta-D-mannuronate at their reducing end.. Its function is as follows. Catalyzes the depolymerization of alginate by cleaving the beta-1,4 glycosidic bond between two adjacent sugar residues via a beta-elimination mechanism. May serve to degrade mislocalized alginate that is trapped in the periplasmic space. This chain is Alginate lyase, found in Pseudomonas putida (strain ATCC 700007 / DSM 6899 / JCM 31910 / BCRC 17059 / LMG 24140 / F1).